The sequence spans 853 residues: EF-hand domain-containing family member B (853 aa).

Disordered regions lie at residues 1-31 and 244-266; these read MCSF…TRAP and AQQP…PGNI. EF-hand domains are found at residues 581–616 and 617–652; these read QNFD…ANLH and LDKM…KDRI. The Ca(2+) site is built by D594, D598, E605, D630, D632, D634, and E641.

In terms of assembly, microtubule inner protein component of sperm flagellar doublet microtubules. Interacts with STIM1 and ORAI1; the interactions take place upon Ca(2+)-store depletion and dissociate through a Ca(2+)-dependent mechanism. Interaction with STIM1 inhibits STIM1 interaction with SARAF.

It localises to the cytoplasm. It is found in the cytoskeleton. Its subcellular location is the cilium axoneme. The protein resides in the flagellum axoneme. In terms of biological role, microtubule inner protein (MIP) part of the dynein-decorated doublet microtubules (DMTs) in cilia axoneme, which is required for motile cilia beating. Cytosolic sensor for calcium, modulates the interaction of STIM1 and ORAI1 upon store depletion and the activation of store-operated Ca(2+) entry (SOCE) and NFAT translocation from cytosol to nucleus. This chain is EF-hand domain-containing family member B, found in Mus musculus (Mouse).